Reading from the N-terminus, the 928-residue chain is Chitin synthase 2 (928 aa).

Disordered regions lie at residues 1–45 (MAYN…EAYA) and 110–179 (AYYT…SPAP). A compositionally biased stretch (polar residues) spans 17–28 (PSAQPQYDSRSP). The segment covering 130–140 (PSHDEPYRPDT) has biased composition (basic and acidic residues). 9 helical membrane passes run 472-492 (SAFG…YVAL), 570-589 (WLNG…YQLW), 613-633 (LFAW…TASL), 644-664 (TVLG…CFIL), 678-698 (MMMV…SIFL), 723-743 (FFGL…ASFL), 753-773 (CFLQ…IYAF), 854-874 (VTAW…IAGF), and 893-913 (VILW…CWFL).

This sequence belongs to the chitin synthase family. Class I subfamily.

The protein resides in the cell membrane. It carries out the reaction [(1-&gt;4)-N-acetyl-beta-D-glucosaminyl](n) + UDP-N-acetyl-alpha-D-glucosamine = [(1-&gt;4)-N-acetyl-beta-D-glucosaminyl](n+1) + UDP + H(+). Its function is as follows. Polymerizes chitin, a structural polymer of the cell wall and septum, by transferring the sugar moiety of UDP-GlcNAc to the non-reducing end of the growing chitin polymer. CHS2 plays a synergistic role to CHS1 in normal yeast cell reproductive growth, even if this role is less predominant than for CHS1. With CHS3, plays an important role in virulence. The sequence is that of Chitin synthase 2 from Exophiala dermatitidis (Black yeast-like fungus).